The following is a 237-amino-acid chain: Phosphoribosylaminoimidazole-succinocarboxamide synthase (237 aa).

Belongs to the SAICAR synthetase family.

The enzyme catalyses 5-amino-1-(5-phospho-D-ribosyl)imidazole-4-carboxylate + L-aspartate + ATP = (2S)-2-[5-amino-1-(5-phospho-beta-D-ribosyl)imidazole-4-carboxamido]succinate + ADP + phosphate + 2 H(+). The protein operates within purine metabolism; IMP biosynthesis via de novo pathway; 5-amino-1-(5-phospho-D-ribosyl)imidazole-4-carboxamide from 5-amino-1-(5-phospho-D-ribosyl)imidazole-4-carboxylate: step 1/2. In Citrobacter koseri (strain ATCC BAA-895 / CDC 4225-83 / SGSC4696), this protein is Phosphoribosylaminoimidazole-succinocarboxamide synthase.